We begin with the raw amino-acid sequence, 919 residues long: Probable dipeptidyl-aminopeptidase B (919 aa).

Residues 1–10 (MRRSDGHEET) show a composition bias toward basic and acidic residues. A disordered region spans residues 1–53 (MRRSDGHEETSEFLPMTHSRSVSAASQTSTDSSLSTESLFPREQKPFPNAMGG). Over 1–92 (MRRSDGHEET…AATGGGRARR (92 aa)) the chain is Cytoplasmic. The span at 21 to 38 (SVSAASQTSTDSSLSTES) shows a compositional bias: low complexity. Residues 93-113 (IFWILVLLCLGGWLLAFVLFL) traverse the membrane as a helical; Signal-anchor for type II membrane protein segment. Topologically, residues 114–919 (TGGRANYQTA…MKRSLRLLSP (806 aa)) are vacuolar. N-linked (GlcNAc...) asparagine glycosylation is found at N200, N352, and N643. Residue S757 is the Charge relay system of the active site. N-linked (GlcNAc...) asparagine glycosylation is present at N811. Catalysis depends on charge relay system residues D834 and H867.

It belongs to the peptidase S9B family.

The protein localises to the vacuole membrane. The enzyme catalyses Release of an N-terminal dipeptide, Xaa-Yaa-|-Zaa-, from a polypeptide, preferentially when Yaa is Pro, provided Zaa is neither Pro nor hydroxyproline.. Type IV dipeptidyl-peptidase which removes N-terminal dipeptides sequentially from polypeptides having unsubstituted N-termini provided that the penultimate residue is proline. The protein is Probable dipeptidyl-aminopeptidase B (dapB) of Aspergillus fumigatus (strain CBS 144.89 / FGSC A1163 / CEA10) (Neosartorya fumigata).